Consider the following 54-residue polypeptide: Lectin alpha chain (54 aa).

It belongs to the leguminous lectin family. As to quaternary structure, tetramer of two alpha and two beta chains.

This Lathyrus tingitanus (Tangier pea) protein is Lectin alpha chain.